The chain runs to 366 residues: tRNA/tmRNA (uracil-C(5))-methyltransferase (366 aa).

Residues glutamine 190, tyrosine 218, asparagine 223, glutamate 239, and aspartate 299 each contribute to the S-adenosyl-L-methionine site. Cysteine 324 acts as the Nucleophile in catalysis. The Proton acceptor role is filled by glutamate 358.

This sequence belongs to the class I-like SAM-binding methyltransferase superfamily. RNA M5U methyltransferase family. TrmA subfamily.

It carries out the reaction uridine(54) in tRNA + S-adenosyl-L-methionine = 5-methyluridine(54) in tRNA + S-adenosyl-L-homocysteine + H(+). The enzyme catalyses uridine(341) in tmRNA + S-adenosyl-L-methionine = 5-methyluridine(341) in tmRNA + S-adenosyl-L-homocysteine + H(+). Its function is as follows. Dual-specificity methyltransferase that catalyzes the formation of 5-methyluridine at position 54 (m5U54) in all tRNAs, and that of position 341 (m5U341) in tmRNA (transfer-mRNA). In Citrobacter koseri (strain ATCC BAA-895 / CDC 4225-83 / SGSC4696), this protein is tRNA/tmRNA (uracil-C(5))-methyltransferase.